The following is a 622-amino-acid chain: MTTPPHLSDRYELGDILGFGGMSEVHLARDIRLHRDVAVKVLRADLARDPSFYLRFRREAQNAAALNHPSIVAVYDTGEAETSAGPLPYIVMEYVDGATLRDIVHTDGPMPPQQAIEIVADACQALNFSHQNGIIHRDVKPANIMISATNAVKVMDFGIARAIADSTSVTQTAAVIGTAQYLSPEQARGDSVDARSDVYSLGCVLYEILTGEPPFIGDSPVSVAYQHVREDPIPPSQRHEGISVDLDAVVLKALAKNPENRYQTAAEMRADLIRVHSGQPPEAPKVLTDADRSCLLSSGAGNFGVPRTDALSRQSLDETESDGSIGRWVAVVAVLAVLTIAIVAAFNTFGGNTRDVQVPDVRGQVSADAISALQNRGFKTRTLQKPDSTIPPDHVISTEPGANASVGAGDEITINVSTGPEQREVPDVSSLNYTDAVKKLTSSGFKSFKQANSPSTPELLGKVIGTNPSANQTSAITNVITIIVGSGPETKQIPDVTGQIVEIAQKNLNVYGFTKFSQASVDSPRPTGEVIGTNPPKDATVPVDSVIELQVSKGNQFVMPDLSGMFWADAEPRLRALGWTGVLDKGPDVDAGGSQHNRVAYQNPPAGAGVNRDGIITLKFGQ.

Residues 1–328 lie on the Cytoplasmic side of the membrane; it reads MTTPPHLSDR…TESDGSIGRW (328 aa). Residues 11–273 form the Protein kinase domain; the sequence is YELGDILGFG…TAAEMRADLI (263 aa). ATP contacts are provided by residues 17-25, lysine 40, and 93-95; these read LGFGGMSEV and EYV. Aspartate 138 serves as the catalytic Proton acceptor. Residues 140–143 and aspartate 156 each bind ATP; that span reads KPAN. 2 residues coordinate Mg(2+): asparagine 143 and aspartate 156. A phosphoserine; by autocatalysis mark is found at serine 166 and serine 168. A phosphothreonine; by autocatalysis mark is found at threonine 170, threonine 172, and threonine 308. The helical transmembrane segment at 329–349 threads the bilayer; sequence VAVVAVLAVLTIAIVAAFNTF. Residues 350 to 622 are Extracellular-facing; it reads GGNTRDVQVP…DGIITLKFGQ (273 aa). 4 PASTA domains span residues 352–418, 419–486, 487–553, and 554–622; these read NTRD…NVST, GPEQ…IVGS, GPET…QVSK, and GNQF…KFGQ. The interval 381–404 is disordered; it reads RTLQKPDSTIPPDHVISTEPGANA.

This sequence belongs to the protein kinase superfamily. Ser/Thr protein kinase family. As to quaternary structure, homodimer. Autophosphorylated. Dephosphorylated by PstP.

Its subcellular location is the cell membrane. It catalyses the reaction L-seryl-[protein] + ATP = O-phospho-L-seryl-[protein] + ADP + H(+). The catalysed reaction is L-threonyl-[protein] + ATP = O-phospho-L-threonyl-[protein] + ADP + H(+). Its function is as follows. Protein kinase that regulates many aspects of mycobacterial physiology. Is a key component of a signal transduction pathway that regulates cell growth, cell shape and cell division via phosphorylation of target proteins. This Mycobacterium leprae (strain TN) protein is Serine/threonine-protein kinase PknB (pknB).